A 276-amino-acid polypeptide reads, in one-letter code: uncharacterized protein (276 aa).

10 helical membrane-spanning segments follow: residues 5–25, 31–51, 63–83, 89–109, 119–139, 142–162, 168–188, 200–220, 231–251, and 253–273; these read IVLA…KYSV, IAIA…IIIL, VFAL…LGEV, VASV…AIFL, VGII…YANI, IALV…GKSL, PITL…PFLP, LIGS…LGWY, ASVF…ILLA, and PLTL…YIVV. EamA domains are found at residues 12–133 and 150–274; these read TFWG…VISE and VAAA…IVVR.

This sequence belongs to the EamA transporter family.

It localises to the cell membrane. This is an uncharacterized protein from Archaeoglobus fulgidus (strain ATCC 49558 / DSM 4304 / JCM 9628 / NBRC 100126 / VC-16).